The chain runs to 574 residues: High-affinity methionine permease (574 aa).

Residues 1–61 (MSEGRTFLSQ…TELDQGEKQL (61 aa)) are Cytoplasmic-facing. A Glycyl lysine isopeptide (Lys-Gly) (interchain with G-Cter in ubiquitin) cross-link involves residue Lys-28. A helical transmembrane segment spans residues 62–82 (GILSCIGLICNRMLGTGVFAV). At 83 to 92 (SSTIYTLCGS) the chain is on the extracellular side. Residues 93–113 (VGLALIMWAVGAIIAISGLYV) traverse the membrane as a helical segment. Residues 114–140 (YMEFGTAIPKNGGEKNYLEAIFRKPKF) are Cytoplasmic-facing. Residues 141-161 (FITCMYAAYIFFLGWAAGNSI) traverse the membrane as a helical segment. Over 162 to 182 (NTAIMFLTAADTEVTKWNQRG) the chain is Extracellular. Residues 183–203 (IGVAVVFFAFLINSLNVKIGL) traverse the membrane as a helical segment. At 204 to 207 (YLQN) the chain is on the cytoplasmic side. Residues 208–228 (ILGIFKIGIVLFISITGWVAL) form a helical membrane-spanning segment. At 229 to 293 (GGGLKDGYQS…VRTLKIAGPT (65 aa)) the chain is on the extracellular side. The chain crosses the membrane as a helical span at residues 294 to 314 (SMVFLAIIYIFVNIAYFAVVP). At 315 to 340 (KDKLISSKLILAADFFDIVFGGQAKR) the chain is on the cytoplasmic side. A helical transmembrane segment spans residues 341–361 (AAAALVGLSALGNVLSVIFSQ). Over 362-418 (GRIIQQLGREGVLPFSNFFASSKPFNSPMVGLFQHFIVCTVTILAPPPGDAYLLVQN) the chain is Extracellular. A helical membrane pass occupies residues 419–439 (LISYPMNIINFAISAGLLWIY). The Cytoplasmic segment spans residues 440–455 (WQRRQGKIEWNPPIKA). A helical membrane pass occupies residues 456-476 (GVFVTGFFTLSNLYLIIAPYV). Over 477–490 (PPSNGESVYSSMPY) the chain is Extracellular. A helical membrane pass occupies residues 491–511 (WIHCVIAWGIFFFGGVYYVVW). At 512-574 (AQLLPRWGHY…HYKSEQEKSL (63 aa)) the chain is on the cytoplasmic side. Residue Thr-552 is modified to Phosphothreonine. Residue Ser-573 is modified to Phosphoserine.

This sequence to yeast low affinity methionine permease (MUP3).

It is found in the membrane. Its function is as follows. High affinity permease for methionine. The chain is High-affinity methionine permease (MUP1) from Saccharomyces cerevisiae (strain ATCC 204508 / S288c) (Baker's yeast).